Reading from the N-terminus, the 509-residue chain is Glycogen synthase (509 aa).

K47 serves as a coordination point for ADP-alpha-D-glucose.

Belongs to the glycosyltransferase 1 family. Bacterial/plant glycogen synthase subfamily.

The enzyme catalyses [(1-&gt;4)-alpha-D-glucosyl](n) + ADP-alpha-D-glucose = [(1-&gt;4)-alpha-D-glucosyl](n+1) + ADP + H(+). It participates in glycan biosynthesis; glycogen biosynthesis. In terms of biological role, synthesizes alpha-1,4-glucan chains using ADP-glucose. The sequence is that of Glycogen synthase from Xanthomonas oryzae pv. oryzae (strain PXO99A).